The following is a 224-amino-acid chain: Imidazole glycerol phosphate synthase subunit HisH (224 aa).

Positions 5–214 (DTIIIDTGCA…MKMNAGSFAG (210 aa)) constitute a Glutamine amidotransferase type-1 domain. Cys-80 (nucleophile) is an active-site residue. Active-site residues include His-189 and Glu-191.

Heterodimer of HisH and HisF.

The protein localises to the cytoplasm. The enzyme catalyses 5-[(5-phospho-1-deoxy-D-ribulos-1-ylimino)methylamino]-1-(5-phospho-beta-D-ribosyl)imidazole-4-carboxamide + L-glutamine = D-erythro-1-(imidazol-4-yl)glycerol 3-phosphate + 5-amino-1-(5-phospho-beta-D-ribosyl)imidazole-4-carboxamide + L-glutamate + H(+). It catalyses the reaction L-glutamine + H2O = L-glutamate + NH4(+). The protein operates within amino-acid biosynthesis; L-histidine biosynthesis; L-histidine from 5-phospho-alpha-D-ribose 1-diphosphate: step 5/9. Its function is as follows. IGPS catalyzes the conversion of PRFAR and glutamine to IGP, AICAR and glutamate. The HisH subunit catalyzes the hydrolysis of glutamine to glutamate and ammonia as part of the synthesis of IGP and AICAR. The resulting ammonia molecule is channeled to the active site of HisF. The protein is Imidazole glycerol phosphate synthase subunit HisH of Shewanella loihica (strain ATCC BAA-1088 / PV-4).